The chain runs to 1350 residues: Ubiquitin carboxyl-terminal hydrolase 47 (1350 aa).

The segment at 111–138 (DGEQPQLTSDESGTADSSGLDDSSQEKF) is disordered. A compositionally biased stretch (polar residues) spans 115 to 132 (PQLTSDESGTADSSGLDD). One can recognise a USP domain in the interval 173-548 (VGLVNQAMTC…NAYMLMYRLK (376 aa)). Residue cysteine 182 is the Nucleophile of the active site. A disordered region spans residues 409–437 (EDEKSPQTDSCTDSGAENEGSCHSDQMSN). The segment covering 415 to 437 (QTDSCTDSGAENEGSCHSDQMSN) has biased composition (polar residues). The active-site Proton acceptor is the histidine 487. Disordered regions lie at residues 815–836 (HPRPTARSVGPKGGGDMNPQED) and 859–1000 (SLQQ…ESGK). The segment covering 859 to 877 (SLQQHQDGGNGDSSKSTEG) has biased composition (polar residues). Residues 916–926 (PEERSDSDVNN) are compositionally biased toward basic and acidic residues. Low complexity predominate over residues 929 to 945 (STSSVDSDILSSSHSSD). Over residues 973–982 (KANDGKKETW) the composition is skewed to basic and acidic residues. Acidic residues predominate over residues 983–996 (DTAEEDSGTDSEYD).

Belongs to the peptidase C19 family. USP47 subfamily.

Its subcellular location is the cytoplasm. It catalyses the reaction Thiol-dependent hydrolysis of ester, thioester, amide, peptide and isopeptide bonds formed by the C-terminal Gly of ubiquitin (a 76-residue protein attached to proteins as an intracellular targeting signal).. Functionally, ubiquitin-specific protease that specifically deubiquitinates monoubiquitinated DNA polymerase beta (polb), stabilizing polb thereby playing a role in base-excision repair (BER). The sequence is that of Ubiquitin carboxyl-terminal hydrolase 47 (usp47) from Xenopus laevis (African clawed frog).